Reading from the N-terminus, the 92-residue chain is Long neurotoxin 1 (92 aa).

The first 21 residues, 1–21 (MKTLLLTLVVVTIVCLDLGYT), serve as a signal peptide directing secretion. 5 disulfides stabilise this stretch: cysteine 24/cysteine 42, cysteine 35/cysteine 63, cysteine 48/cysteine 52, cysteine 67/cysteine 79, and cysteine 80/cysteine 85.

The protein belongs to the three-finger toxin family. Long-chain subfamily. Type II alpha-neurotoxin sub-subfamily. In terms of tissue distribution, expressed by the venom gland.

It is found in the secreted. In terms of biological role, binds with high affinity to muscular (alpha-1/CHRNA1) and neuronal (alpha-7/CHRNA7) nicotinic acetylcholine receptor (nAChR) and inhibits acetylcholine from binding to the receptor, thereby impairing neuromuscular and neuronal transmission. This Oxyuranus microlepidotus (Inland taipan) protein is Long neurotoxin 1.